A 388-amino-acid polypeptide reads, in one-letter code: MADPNGRRRLPTGDPDQANASPSRRVSAVDGVTGGEGRPTYSHFPPGAYEPTDVAYGIRDAANDERARARARARHDQGGGAHDHHHDRPRQDQRGEAHLHDLPGEKSEVPDVGPSDQQGKEASDTDMAPLAALAKRSYDVNFPPLHEHRAAPFPAPAPAFAPAPAGTMGSSSAQVQGDGAPDNHDHDPRHLPRQDQSGGAHPDDLHGEKTIGSGSDILDDSKRGMINAGPQHGRITTSNGGSGSGSDKGKGVSYAGDKPASSSSSSSSAGQQGSDTDKTPSAAAASSYAVNFPPLLPAPAPVPAPAPAPAVAGAMGVANAHHKIALCSKWRKGRCHNGAACRYSHGEEEQRIVPEMRVGGGGRPCPELAAAKGWCRYGLNCKYCHGGV.

Disordered stretches follow at residues 1–130 and 144–282; these read MADP…MAPL and PLHE…TPSA. 2 stretches are compositionally biased toward basic and acidic residues: residues 61–109 and 181–193; these read AAND…KSEV and PDNHDHDPRHLPR. The span at 260 to 274 shows a compositional bias: low complexity; that stretch reads ASSSSSSSSAGQQGS. 2 C3H1-type zinc fingers span residues 321–348 and 359–388; these read HHKIALCSKWRKGRCHNGAACRYSHGEE and GGGGRPCPELAAAKGWCRYGLNCKYCHGGV.

The protein is Zinc finger CCCH domain-containing protein 47 of Oryza sativa subsp. japonica (Rice).